Reading from the N-terminus, the 119-residue chain is Large ribosomal subunit protein bL20 (119 aa).

This sequence belongs to the bacterial ribosomal protein bL20 family.

Its function is as follows. Binds directly to 23S ribosomal RNA and is necessary for the in vitro assembly process of the 50S ribosomal subunit. It is not involved in the protein synthesizing functions of that subunit. The sequence is that of Large ribosomal subunit protein bL20 from Halorhodospira halophila (strain DSM 244 / SL1) (Ectothiorhodospira halophila (strain DSM 244 / SL1)).